The sequence spans 428 residues: Trigger factor (428 aa).

The PPIase FKBP-type domain maps to Gly-163–Pro-248.

This sequence belongs to the FKBP-type PPIase family. Tig subfamily.

The protein localises to the cytoplasm. The catalysed reaction is [protein]-peptidylproline (omega=180) = [protein]-peptidylproline (omega=0). Involved in protein export. Acts as a chaperone by maintaining the newly synthesized protein in an open conformation. Functions as a peptidyl-prolyl cis-trans isomerase. This is Trigger factor from Anoxybacillus flavithermus (strain DSM 21510 / WK1).